An 842-amino-acid polypeptide reads, in one-letter code: MGRHGGPAAAGPTAPSAVRAKAVNAPSQVFVRIAILAALLLLAVYTAFGVHRLQREAMAQPGGAPLAAKADLIAGRVDANLAAQRAGLSAAADLLKRDPGATMDAAETTLRAAGGEAAAVAVVSEAGVVAVAGRDDGADWKAAALAAGASGRTNWVGSVGETGRLYVATTTSLDRARAFVIASGDASRLVADPEKGESGALALPDGKLIAARGRGVQGAGALREAFALSIEDLGDGPAAVRGQAADGALLDVAVRPVAQGALLAVAAAPTRSVANLDRQVMEGAFSLLVPLGVGIALALLLMIQSRKAEVAHREFIDSERRFRLAVEAARCGIWEWDLNGDQVYLSDVTGAMFGWGGGGVVSGQDLLERISIDHRERVRQALANAAMYGAFDVSFRVPASEQGARSLWIDARGQGFGKPGSEGHARIIGVALDVTEERIAQARAQAAENRLRDAIESVSEAFVLWDRQGRLLMCNRNYRSVFSLEPKILKPGAARAEVNRFAALAIKQDHPAPDGAKGVREAEMMDGRWIQISERRTAEGGLVMTAADITAIKTQEEARRRNEEQLQNAVAGLERSQEQLAELARKYETEKVKAESANKAKSEFLANMSHELRTPLNAINGFSEIMMNEMFGPLGDQRYKGYSQDIHSSGQHLLALINDILDMSKIEAGKMNLKFESMHLEDVAEDAVRLVRNRAEAAGLKLDIDFPQLPEIEADYRAVKQVLLNLLSNAIKFTPRAGSVTVRAEVRRDPFGDLIKVSVTDTGIGIAKEDLARLAKPFEQVESQFSKTTQGTGLGLALTKSLITMHDGVLEMHSTPGEGTTVSFTLPVRHSDQKITRDFVAA.

A run of 3 helical transmembrane segments spans residues 29–50, 283–303, and 343–363; these read VFVR…AFGV, GAFS…LLMI, and VYLS…VVSG. The region spanning 318 to 389 is the PAS domain; sequence SERRFRLAVE…QALANAAMYG (72 aa). One can recognise a Histidine kinase domain in the interval 607–830; that stretch reads NMSHELRTPL…TVSFTLPVRH (224 aa). H610 bears the Phosphohistidine; by autocatalysis mark.

It is found in the cell membrane. The enzyme catalyses ATP + protein L-histidine = ADP + protein N-phospho-L-histidine.. Member of the two-component regulatory system involved in the regulation of polar organelle development. PleC functions as a membrane-associated protein kinase that transfers phosphate to the response regulator PleD, leading to its activation. In Caulobacter vibrioides (strain ATCC 19089 / CIP 103742 / CB 15) (Caulobacter crescentus), this protein is Non-motile and phage-resistance protein (pleC).